The chain runs to 129 residues: MESSRLRLLPLLGAALLLLLPLLGARAQEDAELQPRALDIYSAVDDASHEKELPRRQLRAPGAMLQIEALQEVLKKLKSKRIPIYEKKYGQVPMCDAGEQCAVRKGARIGKLCDCPRGTSCNSFLLKCL.

Residues 1 to 27 (MESSRLRLLPLLGAALLLLLPLLGARA) form the signal peptide. At Tyr41 the chain carries Phosphotyrosine. The residue at position 48 (Ser48) is a Phosphoserine. 3 disulfides stabilise this stretch: Cys95–Cys113, Cys101–Cys121, and Cys115–Cys128.

The protein belongs to the CART family.

It localises to the secreted. In terms of biological role, satiety factor closely associated with the actions of leptin and neuropeptide y; this anorectic peptide inhibits both normal and starvation-induced feeding and completely blocks the feeding response induced by neuropeptide Y and regulated by leptin in the hypothalamus. This chain is Cocaine- and amphetamine-regulated transcript protein (Cartpt), found in Mus musculus (Mouse).